Consider the following 382-residue polypeptide: Opsin Rh3 (382 aa).

Topologically, residues 1–56 are extracellular; the sequence is MEYHNVSSVLGNVSSVLRPDARLSAESRLLGWNVPPDELRHIPEHWLIYPEPPESM. An N-linked (GlcNAc...) asparagine glycan is attached at Asn12. The helical transmembrane segment at 57–81 threads the bilayer; sequence NYLLGTLYIFFTVISMIGNGLVMWV. Residues 82–93 lie on the Cytoplasmic side of the membrane; the sequence is FSAAKSLRTPSN. A helical membrane pass occupies residues 94–118; that stretch reads ILVINLAFCDFMMMIKTPIFIYNSF. Over 119–132 the chain is Extracellular; the sequence is HQGYALGHLGCQIF. An intrachain disulfide couples Cys129 to Cys206. A helical membrane pass occupies residues 133-152; sequence GVIGSYTGIAAGATNAFIAY. Over 153–170 the chain is Cytoplasmic; that stretch reads DRYNVITRPMEGKMTHGK. A helical membrane pass occupies residues 171-195; the sequence is AIAMIIFIYLYATPWVVACYTESWG. Topologically, residues 196-219 are extracellular; sequence RFVPEGYLTSCTFDYLTDNFDTRL. Residues 220 to 247 traverse the membrane as a helical segment; that stretch reads FVACIFFFSFVCPTTMITYYYSQIVGHV. Residues 248 to 283 lie on the Cytoplasmic side of the membrane; the sequence is FSHEKALRDQAKKMNVDSLRSNVDKSKEAAEIRIAK. The helical transmembrane segment at 284–307 threads the bilayer; the sequence is AAITICFLFFASWTPYGVMSLIGA. Residues 308 to 315 lie on the Extracellular side of the membrane; that stretch reads FGDKTLLT. The helical transmembrane segment at 316 to 340 threads the bilayer; that stretch reads PGATMIPACTCKMVACIDPFVYAIS. Lys327 bears the N6-(retinylidene)lysine mark. Topologically, residues 341–382 are cytoplasmic; that stretch reads HPRYRMELQKRCPWLAISEKAPESAAAISTSTTQEQQQTTAA.

It belongs to the G-protein coupled receptor 1 family. Opsin subfamily. In terms of processing, phosphorylated on some or all of the serine and threonine residues present in the C-terminal region.

The protein localises to the membrane. Its function is as follows. Visual pigments are the light-absorbing molecules that mediate vision. They consist of an apoprotein, opsin, covalently linked to cis-retinal. The polypeptide is Opsin Rh3 (Rh3) (Drosophila pseudoobscura pseudoobscura (Fruit fly)).